Consider the following 257-residue polypeptide: Type III pantothenate kinase (257 aa).

6-13 (DVGNTNTV) is an ATP binding site. Residues tyrosine 102 and 109–112 (GADR) contribute to the substrate site. The Proton acceptor role is filled by aspartate 111. Residue aspartate 131 participates in K(+) binding. Threonine 134 serves as a coordination point for ATP. Threonine 186 contacts substrate.

Belongs to the type III pantothenate kinase family. As to quaternary structure, homodimer. It depends on NH4(+) as a cofactor. K(+) serves as cofactor.

It localises to the cytoplasm. The catalysed reaction is (R)-pantothenate + ATP = (R)-4'-phosphopantothenate + ADP + H(+). Its pathway is cofactor biosynthesis; coenzyme A biosynthesis; CoA from (R)-pantothenate: step 1/5. Catalyzes the phosphorylation of pantothenate (Pan), the first step in CoA biosynthesis. The sequence is that of Type III pantothenate kinase from Leptospira borgpetersenii serovar Hardjo-bovis (strain JB197).